Reading from the N-terminus, the 379-residue chain is Cytochrome bd-I ubiquinol oxidase subunit 2 (379 aa).

Position 1 is an N-formylmethionine (Met1). The Cytoplasmic portion of the chain corresponds to 1–8 (MIDYEVLR). Residues 9 to 28 (FIWWLLVGVLLIGFAVTDGF) traverse the membrane as a helical segment. Topologically, residues 29 to 79 (DMGVGMLTRFLGRNDTERRIMINSIAPHWDGNQVWLITAGGALFAAWPMVY) are periplasmic. A helical transmembrane segment spans residues 80–99 (AAAFSGFYVAMILVLASLFF). Residues 100–122 (RPVGFDYRSKIEETRWRNMWDWG) lie on the Cytoplasmic side of the membrane. Residues 123 to 142 (IFIGSFVPPLVIGVAFGNLL) traverse the membrane as a helical segment. Over 143 to 164 (QGVPFNVDEYLRLYYTGNFFQL) the chain is Periplasmic. Residues 165–184 (LNPFGLLAGVVSVGMIITQG) traverse the membrane as a helical segment. Residues 185–205 (ATYLQMRTVGELHLRTRATAQ) are Cytoplasmic-facing. The helical transmembrane segment at 206-225 (VAALVTLVCFALAGVWVMYG) threads the bilayer. Topologically, residues 226-262 (IDGYVVKSTMDHYAASNPLNKEVVREAGAWLVNFNNT) are periplasmic. The chain crosses the membrane as a helical span at residues 263 to 282 (PILWAIPALGVVLPLLTILT). Residues 283-292 (ARMDKAAWAF) are Cytoplasmic-facing. Residues 293-312 (VFSSLTLACIILTAGIAMFP) traverse the membrane as a helical segment. Residues 313–336 (FVMPSSTMMNASLTMWDATSSQLT) are Periplasmic-facing. The helical transmembrane segment at 337 to 356 (LNVMTWVAVVLVPIILLYTA) threads the bilayer. Topologically, residues 357–379 (WCYWKMFGRITKEDIERNTHSLY) are cytoplasmic.

The protein belongs to the cytochrome ubiquinol oxidase subunit 2 family. Heterodimer of subunits I and II. Requires heme b as cofactor. Heme d cis-diol serves as cofactor.

The protein resides in the cell inner membrane. The enzyme catalyses 2 a ubiquinol + O2(in) + 4 H(+)(in) = 2 a ubiquinone + 2 H2O(in) + 4 H(+)(out). It participates in energy metabolism; oxidative phosphorylation. Its function is as follows. A terminal oxidase that produces a proton motive force by the vectorial transfer of protons across the inner membrane. It is the component of the aerobic respiratory chain of E.coli that predominates when cells are grown at low aeration. Generates a proton motive force using protons and electrons from opposite sides of the membrane to generate H(2)O, transferring 1 proton/electron. The polypeptide is Cytochrome bd-I ubiquinol oxidase subunit 2 (cydB) (Escherichia coli O157:H7).